The primary structure comprises 367 residues: tRNA-specific 2-thiouridylase MnmA (367 aa).

ATP contacts are provided by residues 13–20 (GLSGGVDS) and M39. The segment at 99-101 (NPD) is interaction with target base in tRNA. The Nucleophile role is filled by C104. The cysteines at positions 104 and 200 are disulfide-linked. Residue G128 participates in ATP binding. The interval 150 to 152 (KDQ) is interaction with tRNA. C200 acts as the Cysteine persulfide intermediate in catalysis. Residues 307-308 (RY) are interaction with tRNA.

It belongs to the MnmA/TRMU family.

The protein localises to the cytoplasm. It catalyses the reaction S-sulfanyl-L-cysteinyl-[protein] + uridine(34) in tRNA + AH2 + ATP = 2-thiouridine(34) in tRNA + L-cysteinyl-[protein] + A + AMP + diphosphate + H(+). Catalyzes the 2-thiolation of uridine at the wobble position (U34) of tRNA, leading to the formation of s(2)U34. The polypeptide is tRNA-specific 2-thiouridylase MnmA (Neisseria meningitidis serogroup A / serotype 4A (strain DSM 15465 / Z2491)).